We begin with the raw amino-acid sequence, 186 residues long: Peptidyl-tRNA hydrolase (186 aa).

Tyr14 serves as a coordination point for tRNA. His19 (proton acceptor) is an active-site residue. Residues Phe64, Asn66, and Asn112 each coordinate tRNA.

It belongs to the PTH family. As to quaternary structure, monomer.

It localises to the cytoplasm. The enzyme catalyses an N-acyl-L-alpha-aminoacyl-tRNA + H2O = an N-acyl-L-amino acid + a tRNA + H(+). Hydrolyzes ribosome-free peptidyl-tRNAs (with 1 or more amino acids incorporated), which drop off the ribosome during protein synthesis, or as a result of ribosome stalling. Functionally, catalyzes the release of premature peptidyl moieties from peptidyl-tRNA molecules trapped in stalled 50S ribosomal subunits, and thus maintains levels of free tRNAs and 50S ribosomes. In Listeria monocytogenes serotype 4b (strain CLIP80459), this protein is Peptidyl-tRNA hydrolase.